A 417-amino-acid chain; its full sequence is PRKCA-binding protein (417 aa).

The PDZ domain occupies 22 to 105 (KVTLQKDAQN…EVTIHYNKLQ (84 aa)). Residues Cys-44 and Cys-46 each coordinate Zn(2+). A Phosphothreonine modification is found at Thr-82. The 214-residue stretch at 144 to 357 (LCNDGLVKRL…CYSVLRDADV (214 aa)) folds into the AH domain. Residues 375–417 (QDEFTDGEDEEDEDEEDTAAGEPPRDSRGAAGPLDKGGSWCNS) form a disordered region. A compositionally biased stretch (acidic residues) spans 377-393 (EFTDGEDEEDEDEEDTA). Cys-415 carries the S-palmitoyl cysteine; by DHHC8 lipid modification.

As to quaternary structure, monomer and homodimer. Interacts with CXADR. Interacts presynaptically with the glutamate receptors GRIA2, GRIA3, GRIK3, isoform 3 of GRIA4, isoform A of GRM4, GRM7 and GRM8; with NAPA and NAPB; and with BTG2. The interaction with NAPA and NAPB disrupts the interaction with GRIA2, conducting to the internalization of GRIA2. Interacts with PRKCA; with the amine transporters SLC6A2 and SLC6A3; with the channels ASIC1 and ASIC2; with the GTP-binding proteins ARF1 and ARF3; with the ephrin receptor tyrosine kinases EPHA7, EPHB1 and EPHB2; with ERBB2 and through its PDZ domain with the C-terminal tail of PRLHR. Interacts with UNC5A. Interacts (via AH domain) with NCS1/FREQ; in a calcium-dependent manner. Interacts with F-actin and associates with the ARP2/3 complex. Interacts (via PDZ domain) with ARF1 (activated); the interaction blocks Arp2/3 complex inhibition. Interacts with SORCS3. Phosphorylation at Thr-82 appears to inhibit the interaction with AMPA receptors. In terms of processing, palmitoylation on Cys-415 is essential for long-term synaptic depression (LTD).

The protein localises to the cytoplasm. Its subcellular location is the perinuclear region. It is found in the membrane. The protein resides in the postsynaptic density. It localises to the synapse. The protein localises to the synaptosome. Its subcellular location is the cytoskeleton. Probable adapter protein that bind to and organize the subcellular localization of a variety of membrane proteins containing some PDZ recognition sequence. Involved in the clustering of various receptors, possibly by acting at the receptor internalization level. Plays a role in synaptic plasticity by regulating the trafficking and internalization of AMPA receptors. May be regulated upon PRKCA activation. May regulate ASIC1/ASIC3 channel. Regulates actin polymerization by inhibiting the actin-nucleating activity of the Arp2/3 complex; the function is competitive with nucleation promoting factors and is linked to neuronal morphology regulation and AMPA receptor (AMPAR) endocytosis. Via interaction with the Arp2/3 complex involved in regulation of synaptic plasicity of excitatory synapses and required for spine shrinkage during long-term depression (LTD). Involved in regulation of astrocyte morphology, antagonistic to Arp2/3 complex activator WASL/N-WASP function. This Bos taurus (Bovine) protein is PRKCA-binding protein (PICK1).